Reading from the N-terminus, the 118-residue chain is Large ribosomal subunit protein bL20 (118 aa).

Belongs to the bacterial ribosomal protein bL20 family.

In terms of biological role, binds directly to 23S ribosomal RNA and is necessary for the in vitro assembly process of the 50S ribosomal subunit. It is not involved in the protein synthesizing functions of that subunit. The polypeptide is Large ribosomal subunit protein bL20 (Trichormus variabilis (strain ATCC 29413 / PCC 7937) (Anabaena variabilis)).